Here is a 96-residue protein sequence, read N- to C-terminus: Protein Vpr (96 aa).

A homooligomerization region spans residues 1-42 (MEQAPEDQGPQREPYNEWTLELLEELKSEAVRHFPRIWLHNL). Serine 79, serine 94, and serine 96 each carry phosphoserine; by host.

It belongs to the HIV-1 VPR protein family. As to quaternary structure, homooligomer, may form homodimer. Interacts with p6-gag region of the Pr55 Gag precursor protein through a (Leu-X-X)4 motif near the C-terminus of the P6gag protein. Interacts with host UNG. May interact with host RAD23A/HHR23A. Interacts with host VPRBP/DCAF1, leading to hijack the CUL4A-RBX1-DDB1-DCAF1/VPRBP complex, mediating ubiquitination of host proteins such as TERT and ZGPAT and arrest of the cell cycle in G2 phase. In terms of processing, phosphorylated on several residues by host. These phosphorylations regulate VPR activity for the nuclear import of the HIV-1 pre-integration complex.

The protein localises to the virion. It is found in the host nucleus. The protein resides in the host extracellular space. During virus replication, may deplete host UNG protein, and incude G2-M cell cycle arrest. Acts by targeting specific host proteins for degradation by the 26S proteasome, through association with the cellular CUL4A-DDB1 E3 ligase complex by direct interaction with host VPRPB/DCAF-1. Cell cycle arrest reportedly occurs within hours of infection and is not blocked by antiviral agents, suggesting that it is initiated by the VPR carried into the virion. Additionally, VPR induces apoptosis in a cell cycle dependent manner suggesting that these two effects are mechanistically linked. Detected in the serum and cerebrospinal fluid of AIDS patient, VPR may also induce cell death to bystander cells. Functionally, during virus entry, plays a role in the transport of the viral pre-integration (PIC) complex to the host nucleus. This function is crucial for viral infection of non-dividing macrophages. May act directly at the nuclear pore complex, by binding nucleoporins phenylalanine-glycine (FG)-repeat regions. This chain is Protein Vpr, found in Homo sapiens (Human).